Here is a 663-residue protein sequence, read N- to C-terminus: Glutamate-rich protein 6 (663 aa).

2 disordered regions span residues 1-74 (MAHL…ETFS) and 106-136 (LTST…HKSF). The span at 20-69 (ESEEELEEEEEEEEVEEEEEEVEEEEEEVEEEEEEVVEEELVGEEQELEA) shows a compositional bias: acidic residues. A compositionally biased stretch (low complexity) spans 112-132 (PSQSATSTETPSASPPSSTSS).

This sequence belongs to the ERICH6 family.

It localises to the nucleus. The polypeptide is Glutamate-rich protein 6 (ERICH6) (Homo sapiens (Human)).